Consider the following 357-residue polypeptide: 3-isopropylmalate dehydrogenase (357 aa).

76–89 (GPKWDALDSNIRPE) serves as a coordination point for NAD(+). The substrate site is built by arginine 96, arginine 106, arginine 134, and aspartate 224. Mg(2+) is bound by residues aspartate 224, aspartate 248, and aspartate 252. 282 to 294 (GSAPDIAGQGVAN) contributes to the NAD(+) binding site.

Belongs to the isocitrate and isopropylmalate dehydrogenases family. LeuB type 1 subfamily. As to quaternary structure, homodimer. Mg(2+) is required as a cofactor. It depends on Mn(2+) as a cofactor.

Its subcellular location is the cytoplasm. The catalysed reaction is (2R,3S)-3-isopropylmalate + NAD(+) = 4-methyl-2-oxopentanoate + CO2 + NADH. It participates in amino-acid biosynthesis; L-leucine biosynthesis; L-leucine from 3-methyl-2-oxobutanoate: step 3/4. In terms of biological role, catalyzes the oxidation of 3-carboxy-2-hydroxy-4-methylpentanoate (3-isopropylmalate) to 3-carboxy-4-methyl-2-oxopentanoate. The product decarboxylates to 4-methyl-2 oxopentanoate. In Saccharophagus degradans (strain 2-40 / ATCC 43961 / DSM 17024), this protein is 3-isopropylmalate dehydrogenase.